Consider the following 833-residue polypeptide: Phenylalanine--tRNA ligase beta subunit (833 aa).

Residues 42-157 (ADLKGPLAVG…PEYEVGTDAI (116 aa)) enclose the tRNA-binding domain. The region spanning 411–485 (SAPHTITIPA…RLEGYENLPS (75 aa)) is the B5 domain. Residues D463, D469, E472, and E473 each coordinate Mg(2+). Positions 739 to 832 (STFPVATQDV…AAERTGAALR (94 aa)) constitute an FDX-ACB domain.

The protein belongs to the phenylalanyl-tRNA synthetase beta subunit family. Type 1 subfamily. As to quaternary structure, tetramer of two alpha and two beta subunits. Mg(2+) serves as cofactor.

Its subcellular location is the cytoplasm. It carries out the reaction tRNA(Phe) + L-phenylalanine + ATP = L-phenylalanyl-tRNA(Phe) + AMP + diphosphate + H(+). In Streptomyces avermitilis (strain ATCC 31267 / DSM 46492 / JCM 5070 / NBRC 14893 / NCIMB 12804 / NRRL 8165 / MA-4680), this protein is Phenylalanine--tRNA ligase beta subunit.